The primary structure comprises 388 residues: Endoglucanase 3 (388 aa).

The first 16 residues, 1 to 16, serve as a signal peptide directing secretion; the sequence is MKHSVLAGLFATGALA. Positions 17 to 52 constitute a CBM1 domain; that stretch reads QGGAWQQCGGVGFSGSTSCVSGYTCVYLNDWYSQCQ. Intrachain disulfides connect Cys-24/Cys-41 and Cys-35/Cys-51. Residues 53 to 91 are linker; it reads PQPTTLRTTTTPGATSTTRSAPAATSTTPAKGKFKWFGI. Positions 56–81 are disordered; it reads TTLRTTTTPGATSTTRSAPAATSTTP. N-linked (GlcNAc...) asparagine glycosylation is found at Asn-92 and Asn-155. The segment at 92–388 is catalytic; it reads NQSCAEFGKG…YNSLLKKYVP (297 aa). The active-site Proton donor is the Glu-215. N-linked (GlcNAc...) asparagine glycosylation is present at Asn-259. The active-site Nucleophile is Glu-322.

Belongs to the glycosyl hydrolase 5 (cellulase A) family.

It catalyses the reaction Endohydrolysis of (1-&gt;4)-beta-D-glucosidic linkages in cellulose, lichenin and cereal beta-D-glucans.. The protein is Endoglucanase 3 (CMC3) of Humicola insolens (Soft-rot fungus).